The following is a 194-amino-acid chain: NADH-quinone oxidoreductase subunit B (194 aa).

The [4Fe-4S] cluster site is built by Cys-73, Cys-74, Cys-138, and Cys-168.

This sequence belongs to the complex I 20 kDa subunit family. NDH-1 is composed of 14 different subunits. Subunits NuoB, C, D, E, F, and G constitute the peripheral sector of the complex. The cofactor is [4Fe-4S] cluster.

Its subcellular location is the cell inner membrane. The catalysed reaction is a quinone + NADH + 5 H(+)(in) = a quinol + NAD(+) + 4 H(+)(out). NDH-1 shuttles electrons from NADH, via FMN and iron-sulfur (Fe-S) centers, to quinones in the respiratory chain. The immediate electron acceptor for the enzyme in this species is believed to be ubiquinone. Couples the redox reaction to proton translocation (for every two electrons transferred, four hydrogen ions are translocated across the cytoplasmic membrane), and thus conserves the redox energy in a proton gradient. This Bradyrhizobium sp. (strain BTAi1 / ATCC BAA-1182) protein is NADH-quinone oxidoreductase subunit B.